Reading from the N-terminus, the 330-residue chain is Ribose-phosphate pyrophosphokinase (330 aa).

55-57 is an ATP binding site; sequence DGE. His-148 and Asp-187 together coordinate Mg(2+). Residue Lys-211 is part of the active site. D-ribose 5-phosphate-binding positions include Arg-213, Asp-237, and 241-245; that span reads DTGGT.

The protein belongs to the ribose-phosphate pyrophosphokinase family. Class I subfamily. Homohexamer. Mg(2+) serves as cofactor.

The protein localises to the cytoplasm. It catalyses the reaction D-ribose 5-phosphate + ATP = 5-phospho-alpha-D-ribose 1-diphosphate + AMP + H(+). It functions in the pathway metabolic intermediate biosynthesis; 5-phospho-alpha-D-ribose 1-diphosphate biosynthesis; 5-phospho-alpha-D-ribose 1-diphosphate from D-ribose 5-phosphate (route I): step 1/1. Its function is as follows. Involved in the biosynthesis of the central metabolite phospho-alpha-D-ribosyl-1-pyrophosphate (PRPP) via the transfer of pyrophosphoryl group from ATP to 1-hydroxyl of ribose-5-phosphate (Rib-5-P). This chain is Ribose-phosphate pyrophosphokinase, found in Nostoc sp. (strain PCC 7120 / SAG 25.82 / UTEX 2576).